We begin with the raw amino-acid sequence, 227 residues long: Cytochrome c oxidase subunit 2 (227 aa).

At 1 to 14 (MAYPFQLGFQDASS) the chain is on the mitochondrial intermembrane side. Residues 15-45 (PIMEELLHFHDHTLMIVFLISSLVLYIISLM) traverse the membrane as a helical segment. Residues 46–59 (LTTKLTHTSTMDAQ) are Mitochondrial matrix-facing. Residues 60–87 (EVETIWTILPAIILILIALPSLRILYMM) traverse the membrane as a helical segment. Residues 88 to 227 (DEINNPSLTV…HFENWSLSMI (140 aa)) are Mitochondrial intermembrane-facing. Cu cation contacts are provided by histidine 161, cysteine 196, glutamate 198, cysteine 200, histidine 204, and methionine 207. Glutamate 198 lines the Mg(2+) pocket.

It belongs to the cytochrome c oxidase subunit 2 family. In terms of assembly, component of the cytochrome c oxidase (complex IV, CIV), a multisubunit enzyme composed of 14 subunits. The complex is composed of a catalytic core of 3 subunits MT-CO1, MT-CO2 and MT-CO3, encoded in the mitochondrial DNA, and 11 supernumerary subunits COX4I, COX5A, COX5B, COX6A, COX6B, COX6C, COX7A, COX7B, COX7C, COX8 and NDUFA4, which are encoded in the nuclear genome. The complex exists as a monomer or a dimer and forms supercomplexes (SCs) in the inner mitochondrial membrane with NADH-ubiquinone oxidoreductase (complex I, CI) and ubiquinol-cytochrome c oxidoreductase (cytochrome b-c1 complex, complex III, CIII), resulting in different assemblies (supercomplex SCI(1)III(2)IV(1) and megacomplex MCI(2)III(2)IV(2)). Found in a complex with TMEM177, COA6, COX18, COX20, SCO1 and SCO2. Interacts with TMEM177 in a COX20-dependent manner. Interacts with COX20. Interacts with COX16. Requires Cu cation as cofactor.

The protein resides in the mitochondrion inner membrane. The enzyme catalyses 4 Fe(II)-[cytochrome c] + O2 + 8 H(+)(in) = 4 Fe(III)-[cytochrome c] + 2 H2O + 4 H(+)(out). In terms of biological role, component of the cytochrome c oxidase, the last enzyme in the mitochondrial electron transport chain which drives oxidative phosphorylation. The respiratory chain contains 3 multisubunit complexes succinate dehydrogenase (complex II, CII), ubiquinol-cytochrome c oxidoreductase (cytochrome b-c1 complex, complex III, CIII) and cytochrome c oxidase (complex IV, CIV), that cooperate to transfer electrons derived from NADH and succinate to molecular oxygen, creating an electrochemical gradient over the inner membrane that drives transmembrane transport and the ATP synthase. Cytochrome c oxidase is the component of the respiratory chain that catalyzes the reduction of oxygen to water. Electrons originating from reduced cytochrome c in the intermembrane space (IMS) are transferred via the dinuclear copper A center (CU(A)) of subunit 2 and heme A of subunit 1 to the active site in subunit 1, a binuclear center (BNC) formed by heme A3 and copper B (CU(B)). The BNC reduces molecular oxygen to 2 water molecules using 4 electrons from cytochrome c in the IMS and 4 protons from the mitochondrial matrix. This chain is Cytochrome c oxidase subunit 2 (MT-CO2), found in Oryctolagus cuniculus (Rabbit).